A 299-amino-acid chain; its full sequence is Lathosterol oxidase (299 aa).

3 helical membrane passes run 32-52 (VSLL…CATL), 79-99 (FTVK…LLEL), and 117-137 (IHLI…IYWI). In terms of domain architecture, Fatty acid hydroxylase spans 124–252 (ISFLFFTDML…YFTLWDRIGG (129 aa)). Positions 138–143 (HRGLHH) match the Histidine box-1 motif. The Histidine box-2 motif lies at 151-155 (HKPHH). The Histidine box-3 signature appears at 228–233 (HHTDHH). The residue at position 253 (S253) is a Phosphoserine.

It belongs to the sterol desaturase family. Fe cation is required as a cofactor.

The protein localises to the endoplasmic reticulum membrane. The catalysed reaction is a Delta(7)-sterol + 2 Fe(II)-[cytochrome b5] + O2 + 2 H(+) = a Delta(5),Delta(7)-sterol + 2 Fe(III)-[cytochrome b5] + 2 H2O. It carries out the reaction lathosterol + 2 Fe(II)-[cytochrome b5] + O2 + 2 H(+) = 7-dehydrocholesterol + 2 Fe(III)-[cytochrome b5] + 2 H2O. It catalyses the reaction 5alpha-cholesta-7,24-dien-3beta-ol + 2 Fe(II)-[cytochrome b5] + O2 + 2 H(+) = 7-dehydrodesmosterol + 2 Fe(III)-[cytochrome b5] + 2 H2O. It participates in steroid biosynthesis; cholesterol biosynthesis. Its function is as follows. Catalyzes the penultimate step of the biosynthesis of cholesterol, the dehydrogenation of lathosterol into 7-dehydrocholesterol (7-DHC). Cholesterol is the major sterol component in mammalian membranes and a precursor for bile acid and steroid hormone synthesis. In addition to its essential role in cholesterol biosynthesis, it also indirectly regulates ferroptosis through the production of 7-DHC. By diverting the spread of damage caused by peroxyl radicals from the phospholipid components to its sterol nucleus, 7-DHC prevents this form of cell death. This is Lathosterol oxidase from Rattus norvegicus (Rat).